A 611-amino-acid chain; its full sequence is UvrABC system protein C (611 aa).

Positions 6 to 84 (NNPGVYRMFN…IKRLRPRFNV (79 aa)) constitute a GIY-YIG domain. A UVR domain is found at 194–229 (QSVKDHLAAAMQAASADLDFEHAAVYRDRLAALSHV).

Belongs to the UvrC family. In terms of assembly, interacts with UvrB in an incision complex.

The protein localises to the cytoplasm. The UvrABC repair system catalyzes the recognition and processing of DNA lesions. UvrC both incises the 5' and 3' sides of the lesion. The N-terminal half is responsible for the 3' incision and the C-terminal half is responsible for the 5' incision. This chain is UvrABC system protein C, found in Brucella abortus (strain 2308).